A 54-amino-acid polypeptide reads, in one-letter code: Large ribosomal subunit protein bL33A (54 aa).

This sequence belongs to the bacterial ribosomal protein bL33 family.

The sequence is that of Large ribosomal subunit protein bL33A from Mycobacterium marinum (strain ATCC BAA-535 / M).